The chain runs to 21 residues: Buforin-2 (21 aa).

Lys-21 carries the N6-(2-hydroxyisobutyryl)lysine; alternate modification.

This sequence belongs to the histone H2A family. In terms of tissue distribution, expressed by the skin glands.

The protein localises to the secreted. Antimicrobial peptide with potent activity against some Gram-positive and Gram-negative bacteria. Does not permeabilize membrane, but internalizes into bacterial cells and alter specific gene expression involved in bacterial resistance mechanisms. Has the ability to agglutinate E.coli, and lipid vesicles. Shows a weak hemolytic activity, and is not cytotoxic to monocytes. The polypeptide is Buforin-2 (Sphaenorhynchus lacteus (Orinoco lime treefrog)).